The following is a 452-amino-acid chain: Prephenate dehydrogenase [NADP(+)] (452 aa).

14 to 43 (KVIGIIGLGDMGLLYANKFTDAGWGVICCD) serves as a coordination point for NADP(+). Residues 14–297 (KVIGIIGLGD…GKHTGLLLLD (284 aa)) form the Prephenate/arogenate dehydrogenase domain.

Belongs to the prephenate/arogenate dehydrogenase family.

The enzyme catalyses prephenate + NADP(+) = 3-(4-hydroxyphenyl)pyruvate + CO2 + NADPH. It functions in the pathway amino-acid biosynthesis; L-tyrosine biosynthesis; (4-hydroxyphenyl)pyruvate from prephenate (NADP(+) route): step 1/1. In Saccharomyces cerevisiae (strain ATCC 204508 / S288c) (Baker's yeast), this protein is Prephenate dehydrogenase [NADP(+)] (TYR1).